Reading from the N-terminus, the 311-residue chain is Nod factor export ATP-binding protein I (311 aa).

The region spanning 13-243 is the ABC transporter domain; the sequence is IDLAGVSKSY…QIGCPVIEIY (231 aa). Residue 45–52 coordinates ATP; the sequence is GPNGAGKS.

This sequence belongs to the ABC transporter superfamily. Lipooligosaccharide exporter (TC 3.A.1.102) family. In terms of assembly, the complex is composed of two ATP-binding proteins (NodI) and two transmembrane proteins (NodJ).

It localises to the cell inner membrane. Its function is as follows. Part of the ABC transporter complex NodIJ involved in the export of the nodulation factors (Nod factors), the bacterial signal molecules that induce symbiosis and subsequent nodulation induction. Nod factors are LCO (lipo-chitin oligosaccharide), a modified beta-1,4-linked N-acetylglucosamine oligosaccharide. This subunit is responsible for energy coupling to the transport system. The sequence is that of Nod factor export ATP-binding protein I from Rhizobium leguminosarum bv. viciae.